A 424-amino-acid polypeptide reads, in one-letter code: Chloroquine resistance transporter (424 aa).

Topologically, residues 1-49 are cytoplasmic; sequence MKFASKKNNQKNSSKNDERYRELDNLVQEGNGSRLGGGSCLGKCAHVFK. An intramembrane segment occupies 50 to 58; it reads LIFKEIKDN. Residues 59 to 83 form a helical membrane-spanning segment; it reads IFIYILSIIYLSVSVMNTIFAKRTL. The Vacuolar portion of the chain corresponds to 84-89; it reads NKIGNY. A helical membrane pass occupies residues 90–111; sequence SFVTSETHNFICMIMFFIVYSL. The Cytoplasmic segment spans residues 112-126; the sequence is FGNKKGNSKERHRSF. Residues 127 to 147 traverse the membrane as a helical segment; that stretch reads NLQFFAISMLDACSVILAFIG. Residues 148–152 lie on the Vacuolar side of the membrane; the sequence is LTRTT. A helical transmembrane segment spans residues 153 to 173; it reads GNIQSFVLQLSIPINMFFCFL. At 174-180 the chain is on the cytoplasmic side; the sequence is ILRYRYH. The chain crosses the membrane as a helical span at residues 181 to 202; that stretch reads LYNYLGAVIIVVTIALVEMKLS. The Vacuolar segment spans residues 203-210; sequence FETQEENS. Residues 211-236 traverse the membrane as a helical segment; that stretch reads IIFNLVLISSLIPVCFSNMTREIVFK. The Cytoplasmic portion of the chain corresponds to 237–241; it reads KYKID. A helical membrane pass occupies residues 242-263; sequence ILRLNAMVSFFQLFTSCLILPV. Residues 264 to 279 lie on the Vacuolar side of the membrane; the sequence is YTLPFLKQLHLPYNEI. The stretch at 280–292 is an intramembrane region; that stretch reads WTNIKNGFACLFL. Cystine bridges form between Cys289–Cys312 and Cys301–Cys309. The Vacuolar segment spans residues 293-314; sequence GRNTVVENCGLGMAKLCDDCDG. Residues 315–339 traverse the membrane as a helical segment; it reads AWKTFALFSFFDICDNLITSYIIDK. Topologically, residues 340-343 are cytoplasmic; that stretch reads FSTM. Residues 344–361 form a helical membrane-spanning segment; the sequence is TYTIVSCIQGPALAIAYY. At 362 to 374 the chain is on the vacuolar side; the sequence is FKFLAGDVVREPR. The helical transmembrane segment at 375-397 threads the bilayer; it reads LLDFVTLFGYLFGSIIYRVGNII. Over 398 to 424 the chain is Cytoplasmic; it reads LERKKMRNEENEDSEGELTNVDSIITQ.

Belongs to the CRT-like transporter family. Monomer.

Its subcellular location is the membrane. It localises to the vacuole membrane. It carries out the reaction L-arginine(in) = L-arginine(out). It catalyses the reaction L-lysine(in) = L-lysine(out). The enzyme catalyses L-histidine(out) = L-histidine(in). The catalysed reaction is Fe(3+)(in) = Fe(3+)(out). It carries out the reaction Fe(2+)(in) = Fe(2+)(out). Nutrient transporter. Substrate transport is pH-dependent. Can transport arginine, lysine, histidine and peptides. Involved in maintaining the osmotic homeostasis of the digestive vacuole. Required for the normal asexual intraerythrocytic proliferation of parasites. Can transport Fe(2+) and Fe(3+). The sequence is that of Chloroquine resistance transporter from Plasmodium falciparum (isolate 7G8).